Consider the following 220-residue polypeptide: MTTSESVQETLGLDFPHPSKPRVLLAASGSVAAIKFESLCRSFSEWAEVRAVATKASLHFIDRTSLPSNIILYTDDDEWSTWKKIGDEVLHIELRKWADIMVIAPLSANTLAKIAGGLCDNLLTCIVRAWDYSKPLFVAPAMNTFMWNNPFTSRHLETINLLGISLVPPITKRLACGDYGNGAMAEPSVIDSTVRLACKRQPLNTNSSPVVPAGRNLPSS.

Residues 29 to 31 (GSV) and 54 to 56 (TKA) contribute to the FMN site. Residue histidine 91 is the Proton donor of the active site. FMN-binding positions include 107 to 110 (SANT) and alanine 141. Residues asparagine 143, arginine 173, and alanine 175 each contribute to the N-[(R)-4-phosphopantothenoyl]-L-cysteine site. The Proton donor role is filled by cysteine 176. Methionine 184 contacts N-[(R)-4-phosphopantothenoyl]-L-cysteine.

Belongs to the HFCD (homooligomeric flavin containing Cys decarboxylase) superfamily. In terms of assembly, forms homotrimers. Interacts with HIP1. Interacts with HD1 in the dark. Requires FMN as cofactor. Expressed in root meristem, shoot apical meristem (SAM), intercalary meristem, floral meristem, embryo and tip of the coleoptile before true leaf emergence.

The protein localises to the nucleus. It carries out the reaction N-[(R)-4-phosphopantothenoyl]-L-cysteine + H(+) = (R)-4'-phosphopantetheine + CO2. It functions in the pathway cofactor biosynthesis; coenzyme A biosynthesis; CoA from (R)-pantothenate: step 3/5. In terms of biological role, catalyzes the decarboxylation of 4'-phosphopantothenoylcysteine to 4'-phosphopantetheine, a key step in coenzyme A biosynthesis. Involved in salt and osmotic tolerance, and light-regulated plant growth. Trimerization of HAL3 recruits and activates the E3 ubiquitin-protein ligase HIP1, which leads to the degradation of cell cycle suppressors, resulting in enhancement of cell division and plant growth. HAL3 function in cell division seems to be independent from its PPC decarboxylase activity. Acts as a positive regulator of flowering by binding to HD1 in the dark. In Oryza sativa subsp. japonica (Rice), this protein is Phosphopantothenoylcysteine decarboxylase.